A 181-amino-acid polypeptide reads, in one-letter code: Large ribosomal subunit protein uL5 (181 aa).

Belongs to the universal ribosomal protein uL5 family. In terms of assembly, part of the 50S ribosomal subunit; contacts the 5S rRNA and probably tRNA. Forms a bridge to the 30S subunit in the 70S ribosome.

In terms of biological role, this is one of the proteins that bind and probably mediate the attachment of the 5S RNA into the large ribosomal subunit, where it forms part of the central protuberance. In the 70S ribosome it contacts protein S13 of the 30S subunit (bridge B1b), connecting the 2 subunits; this bridge is implicated in subunit movement. May contact the P site tRNA; the 5S rRNA and some of its associated proteins might help stabilize positioning of ribosome-bound tRNAs. The sequence is that of Large ribosomal subunit protein uL5 from Methanococcus maripaludis (strain C5 / ATCC BAA-1333).